We begin with the raw amino-acid sequence, 259 residues long: Hydroxyacylglutathione hydrolase (259 aa).

Zn(2+) is bound by residues histidine 56, histidine 58, aspartate 60, histidine 61, histidine 112, aspartate 133, and histidine 171.

This sequence belongs to the metallo-beta-lactamase superfamily. Glyoxalase II family. In terms of assembly, monomer. Zn(2+) is required as a cofactor.

It carries out the reaction an S-(2-hydroxyacyl)glutathione + H2O = a 2-hydroxy carboxylate + glutathione + H(+). The protein operates within secondary metabolite metabolism; methylglyoxal degradation; (R)-lactate from methylglyoxal: step 2/2. Thiolesterase that catalyzes the hydrolysis of S-D-lactoyl-glutathione to form glutathione and D-lactic acid. This Pseudomonas entomophila (strain L48) protein is Hydroxyacylglutathione hydrolase.